A 115-amino-acid chain; its full sequence is NADH-ubiquinone oxidoreductase chain 3 (115 aa).

The next 3 membrane-spanning stretches (helical) occupy residues 1–21 (MITL…LLII), 55–75 (FFLV…LFPL), and 87–107 (AIIL…YEWL).

This sequence belongs to the complex I subunit 3 family.

It localises to the mitochondrion membrane. It catalyses the reaction a ubiquinone + NADH + 5 H(+)(in) = a ubiquinol + NAD(+) + 4 H(+)(out). Its function is as follows. Core subunit of the mitochondrial membrane respiratory chain NADH dehydrogenase (Complex I) that is believed to belong to the minimal assembly required for catalysis. Complex I functions in the transfer of electrons from NADH to the respiratory chain. The immediate electron acceptor for the enzyme is believed to be ubiquinone. This is NADH-ubiquinone oxidoreductase chain 3 (MT-ND3) from Myxine glutinosa (Atlantic hagfish).